We begin with the raw amino-acid sequence, 409 residues long: Arginine deiminase (409 aa).

Residue Cys-399 is the Amidino-cysteine intermediate of the active site.

This sequence belongs to the arginine deiminase family.

It localises to the cytoplasm. The catalysed reaction is L-arginine + H2O = L-citrulline + NH4(+). It functions in the pathway amino-acid degradation; L-arginine degradation via ADI pathway; carbamoyl phosphate from L-arginine: step 1/2. This Latilactobacillus sakei (Lactobacillus sakei) protein is Arginine deiminase (arcA).